We begin with the raw amino-acid sequence, 729 residues long: Monosaccharide-sensing protein 2 (729 aa).

A run of 6 helical transmembrane segments spans residues 1–21, 47–67, 81–101, 104–124, 139–159, and 165–185; these read MSGA…QGWD, LIVA…GGVA, ILYF…VLLL, LLDG…ISET, FTGS…SLMP, and LMLG…VFFL. Acidic residues predominate over residues 347–363; it reads VGEGEDYPSDHGDDSED. Disordered regions lie at residues 347-367 and 423-442; these read VGEG…DLHS and ERED…RRGS. The segment covering 423–434 has biased composition (basic and acidic residues); that stretch reads EREDESGQKEEG. 2 positions are modified to phosphoserine: Ser-438 and Gly-448. 6 consecutive transmembrane segments (helical) span residues 507-527, 553-573, 585-605, 610-630, 650-670, and 679-699; these read ALVV…NGVL, ASLL…AVAM, LLTT…SNLV, IVHA…FVMG, ICIA…TYSL, and LAGV…FVFI.

This sequence belongs to the major facilitator superfamily. Sugar transporter (TC 2.A.1.1) family. In terms of tissue distribution, mostly expressed in roots and stems, and, to a lower extent, in juvenile and adult leaves, and in flower tissues.

The protein resides in the vacuole membrane. It carries out the reaction D-glucose(out) + H(+)(in) = D-glucose(in) + H(+)(out). The enzyme catalyses sucrose(out) + H(+)(in) = sucrose(in) + H(+)(out). In terms of biological role, sugar proton-coupled antiporter which contributes to vacuolar sugar import (e.g. monosaccharides including glucose, sucrose and fructose), particularly during stress responses (e.g. in response to cold). The protein is Monosaccharide-sensing protein 2 of Arabidopsis thaliana (Mouse-ear cress).